Reading from the N-terminus, the 693-residue chain is MKEWRKNLFGREWLFQHGKVAKQSAGSIWARFGDSVVLATVNVSDNVVEGIDFVPLTVEFMEKFYAAGKIPGGFVKREGKPSESGILSSRLIDRPIRPLFPKNLRNEVQVIVTVLSVDPNCPTDVLGITAASLALNISRVPFDGIVAGVQIGYVDGQFIVFPTAEQLERSKIDIVVAGTKDAITMVEGEAKEVTEEEMLQALMTAHEAIKQIVAFQEEVIKEFNVEKMPLPEPKYNVELVEKFVEYIDMTELEKRIFARGKQERAEMADEYYESIVQKFFEDNNIPEEEQEEYAIPLKEKYDEISKKLMRKIIIERGLRADGRGPKDIRPITCEVGLLPRTHGSSLFTRGETQSLGIVTLGSPAEEQIIDTLIEEGTKRFILHYNFPPFSTGEVKPLRGPSRREIGHGHLAERAVKAIIPPEDEFPYVIRVVSEILESNGSSSMATVCSASLALMDAGVPTKKHVAGVAMGLILEEGKGVILTDIIGLEDHWGDMDFKVAGTKDGITAFQMDCKVSGVSEELLRQALYQAKEARMFILDKLYETISEPRKELSPYAPRISWFFIDPTRSGELIGPGGKTIKSIIKMFDVEISLDDSTGKVTVSGVDAEKVQEAVEYIQNMFRDISIGDLYTGKVTRVENYGIFVEIMPGKIGLVHSSKLGNVKPTSFKVGDKIKVEVINIDDAGRLQFRRLEE.

Residues Asp490 and Asp496 each coordinate Mg(2+). A KH domain is found at 557–617 (PRISWFFIDP…EKVQEAVEYI (61 aa)). Residues 627-691 (GDLYTGKVTR…DAGRLQFRRL (65 aa)) enclose the S1 motif domain.

It belongs to the polyribonucleotide nucleotidyltransferase family. It depends on Mg(2+) as a cofactor.

Its subcellular location is the cytoplasm. The enzyme catalyses RNA(n+1) + phosphate = RNA(n) + a ribonucleoside 5'-diphosphate. In terms of biological role, involved in mRNA degradation. Catalyzes the phosphorolysis of single-stranded polyribonucleotides processively in the 3'- to 5'-direction. This is Polyribonucleotide nucleotidyltransferase from Fervidobacterium nodosum (strain ATCC 35602 / DSM 5306 / Rt17-B1).